The chain runs to 166 residues: Large ribosomal subunit protein uL10 (166 aa).

The protein belongs to the universal ribosomal protein uL10 family. Part of the ribosomal stalk of the 50S ribosomal subunit. The N-terminus interacts with L11 and the large rRNA to form the base of the stalk. The C-terminus forms an elongated spine to which L12 dimers bind in a sequential fashion forming a multimeric L10(L12)X complex.

Functionally, forms part of the ribosomal stalk, playing a central role in the interaction of the ribosome with GTP-bound translation factors. The polypeptide is Large ribosomal subunit protein uL10 (Pseudomonas entomophila (strain L48)).